The following is a 1147-amino-acid chain: Multiple epidermal growth factor-like domains protein 10 (1147 aa).

The signal sequence occupies residues 1-25; that stretch reads MAISSSSCLGLICSLLCHWVGTASS. The segment at 1–857 is necessary for interaction with AP2M1, self-assembly and formation of the irregular, mosaic-like adhesion pattern; the sequence is MAISSSSCLG…ALPADSYQIG (857 aa). Topologically, residues 26-857 are extracellular; it reads LNLEDPNVCS…ALPADSYQIG (832 aa). The EMI domain occupies 30–107; it reads DPNVCSHWES…FYESRDMCVP (78 aa). Disulfide bonds link Cys-34/Cys-95, Cys-60/Cys-69, Cys-94/Cys-105, Cys-109/Cys-124, Cys-126/Cys-135, Cys-148/Cys-160, Cys-154/Cys-167, Cys-169/Cys-178, Cys-191/Cys-203, Cys-197/Cys-210, Cys-212/Cys-221, Cys-234/Cys-246, Cys-240/Cys-253, Cys-255/Cys-264, Cys-281/Cys-289, Cys-283/Cys-296, Cys-298/Cys-307, Cys-320/Cys-332, Cys-326/Cys-339, Cys-341/Cys-350, Cys-409/Cys-421, Cys-415/Cys-428, Cys-430/Cys-439, Cys-456/Cys-464, Cys-458/Cys-471, Cys-473/Cys-482, Cys-495/Cys-507, Cys-501/Cys-514, Cys-516/Cys-525, Cys-542/Cys-550, Cys-544/Cys-557, Cys-559/Cys-568, Cys-581/Cys-593, Cys-587/Cys-600, Cys-602/Cys-611, Cys-669/Cys-681, Cys-675/Cys-688, Cys-690/Cys-699, Cys-716/Cys-724, Cys-718/Cys-731, Cys-733/Cys-742, Cys-755/Cys-767, Cys-761/Cys-774, Cys-776/Cys-785, Cys-802/Cys-810, Cys-804/Cys-817, and Cys-819/Cys-828. 15 consecutive EGF-like domains span residues 101 to 136, 144 to 179, 187 to 222, 230 to 265, 278 to 308, 316 to 351, 405 to 440, 453 to 483, 491 to 526, 539 to 569, 577 to 612, 665 to 700, 713 to 743, 751 to 786, and 799 to 829; these read SRDMCVPHCADKCVHGRCIAPNTCQCEPGWGGTNCS, WGPHCSSRCQCKNRALCNPITGACHCAAGYRGWRCE, YGNDCHQRCQCQNGATCDHITGECRCSPGYTGAFCE, HGPHCEQRCPCQNGGVCHHVTGECSCPSGWMGTVCG, SQECQCHNGGTCDAATGQCHCSPGYTGERCQ, YGVRCAEACRCVNGGKCYHVSGTCLCEAGFSGELCE, YGEACQQICSCQNGADCDSVTGRCACAPGFKGTDCS, SSRCGCKNDAVCSPVDGSCICKAGWHGVDCS, WGFGCNLTCQCLNGGACNTLDGTCTCAPGWRGAKCE, AERCDCSHADGCHPTTGHCRCLPGWSGVHCD, WGPNCSLPCYCKNGASCSPDDGICECAPGFRGTTCQ, FGKNCAGVCTCTNNGTCNPIDRSCQCYPGWIGSDCS, IHTCNCHNGAFCSAYDGECKCTPGWTGLYCT, YGKDCALICQCQNGADCDHISGQCTCRTGFMGRHCE, and RQICDCLNNSTCDHITGTCYCSPGWKGARCD. Asn-134 carries N-linked (GlcNAc...) asparagine glycosylation. An N-linked (GlcNAc...) asparagine glycan is attached at Asn-496. Residues 858 to 878 form a helical membrane-spanning segment; that stretch reads AIAGIVVLVLVVLFLLALFII. The Cytoplasmic segment spans residues 879-1147; the sequence is YRHKQKRKES…STSSSSSSSE (269 aa). A necessary for formation of large intracellular vacuoles region spans residues 945-1147; that stretch reads RDRMTIAKSK…STSSSSSSSE (203 aa). The residue at position 1030 (Tyr-1030) is a Phosphotyrosine. Positions 1093-1147 are disordered; the sequence is HVTQDPYDLPKNSHIPCHYDLLPVRDSSSSPKREDGGGSNSTSSNSTSSSSSSSE. The segment covering 1132 to 1147 has biased composition (low complexity); it reads NSTSSNSTSSSSSSSE.

Belongs to the MEGF family. In terms of assembly, homomer. Interacts with GULP1 and ABCA1. Interacts with AP2M1. Does not interact with MEGF11. Binds with high affinity to complement C1q. Interacts (via the cytoplasmic domain) with NOTCH1 (via NICD domain). Post-translationally, ubiquitinated; mono- and polyubiquitinated forms are detected. Phosphorylated on tyrosine residues. Phosphorylation at Tyr-1030 may be important for muscle cell proliferation. In terms of tissue distribution, expressed in cerebellum (at protein level). Expressed in kidney, stellate cells of the cerebellum and macrophage cell lines.

The protein resides in the cell membrane. Its subcellular location is the cell projection. It is found in the phagocytic cup. Its function is as follows. Membrane receptor involved in phagocytosis by macrophages and astrocytes of apoptotic cells. Receptor for C1q, an eat-me signal, that binds phosphatidylserine expressed on the surface of apoptotic cells. Cooperates with ABCA1 within the process of engulfment. Promotes the formation of large intracellular vacuoles and may be responsible for the uptake of amyloid-beta peptides. Necessary for astrocyte-dependent apoptotic neuron clearance in the developing cerebellum. Plays a role in muscle cell proliferation, adhesion and motility. Is also an essential factor in the regulation of myogenesis. Controls the balance between skeletal muscle satellite cells proliferation and differentiation through regulation of the notch signaling pathway. May also function in the mosaic spacing of specific neuron subtypes in the retina through homotypic retinal neuron repulsion. Mosaics provide a mechanism to distribute each cell type evenly across the retina, ensuring that all parts of the visual field have access to a full set of processing elements. The protein is Multiple epidermal growth factor-like domains protein 10 of Mus musculus (Mouse).